The following is a 170-amino-acid chain: MDHDHMHGMPRPSSSSSSSPSSMMNNGSMNEGGGHHHMKMMMHMTFFWGKNTEVLFSGWPGTSSGMYALCLIFVFFLAVLTEWLAHSSLLRGSTGDSANRAAGLIQTAVYTLRIGLAYLVMLAVMSFNAGVFLVALAGHAVGFMLFGSQTFRNTSDDRKTNYVPPSGCAC.

Residues 1 to 29 form a disordered region; it reads MDHDHMHGMPRPSSSSSSSPSSMMNNGSM. The span at 9-29 shows a compositional bias: low complexity; that stretch reads MPRPSSSSSSSPSSMMNNGSM. 2 consecutive transmembrane segments (helical) span residues 65-85 and 114-134; these read GMYA…EWLA and IGLA…VFLV.

This sequence belongs to the copper transporter (Ctr) (TC 1.A.56) family. SLC31A subfamily. Expressed in the root apex, lateral root primordia, embryo, trichomes, guard cells and pollen grains.

Its subcellular location is the membrane. Copper transporter involved in copper acquisition and transport in leaves. Required for copper homeostasis and normal plant growth and development. This is Copper transporter 1 (COPT1) from Arabidopsis thaliana (Mouse-ear cress).